Consider the following 754-residue polypeptide: MSFFGFNTTLPKENMFPNEGQLEEDGIDFEETYDDLGNQLNEAGDELNDETFGVSAGSIGRDFDFSGTTAQASAQLEDEQYQINQQNIFAKPVKPASSELPQVSRLNGASQFPSREPASTAINKLSDLQPMASIWENIVPEKPAIIPPEVASLQDRLGAQPSEKVFSLQELEEQLLNSMTAPKPPSQPAIPIVPSEMAAQVTRENISSLDPAISAASIGNVTFGQPNIPSTTTDFAGLAAPNMVHPSQAIPNPVMQPSLVPQMPYPQNGMYNPSVAPPASLVNLFQQEQLIQNQNLDEKRQKLERDHMLMAQCAGLMTRSDKSFIARIQISQLMSEDPESDDFYYRVYSIIRGRKPSEEEASHFIQTYLGPSNNRRRGRRSENPMQKLQQQLQRLVSSAKERPKATQLSLEGALGKIAVNTVRTPRQLLNVKRPTEPASSNSSLNNFSGFSTKKDVLHAIEKVYDLLLDFEQALRKASTLETTDQEQIDTWKTTLSEKLESIWKALYINESLEASSKTRPPFISIISHPKGMRLLPRLFPHLSKEQQISILKVVVYNFDSLDIVLRGTFDVNGELPLDVVSEMSSFTQFIIPPLLTIVNELDLETINNLFSQLLNRTNAVYLIQTKIGLSFLTLFISRAEILKQSGTVNQNEKEEWENTFNVMFNRVKGHFSTVFPPPNARAYADESYPWEFLAACATAASSEQHFTLVSETRDRVLDNIITSKRAPSEIAVVRISNVNLFLNAMGLDARQLSA.

The tract at residues 499 to 754 (LESIWKALYI…MGLDARQLSA (256 aa)) is interaction with lsm1.

The protein belongs to the PAT1 family. In terms of assembly, interacts with dcp2. Interacts with lsm1; via C-terminus.

The protein resides in the cytoplasm. It is found in the nucleus. The protein localises to the P-body. Its function is as follows. Activator of decapping that functions as a general and active mechanism of translational repression and required for P-body formation. Stabilizes the 3' terminus of mRNAs and modulates the rates of mRNA-decapping that occur following deadenylation. Might be required for promoting the formation or the stabilization of the preinitiation translation complexes. Necessary for accurate chromosome transmission during cell division. Together with lsm1, recruits the deadenylase ccr4 to P-bodies. The chain is Deadenylation-dependent mRNA-decapping factor pdc2 from Schizosaccharomyces pombe (strain 972 / ATCC 24843) (Fission yeast).